The sequence spans 211 residues: uncharacterized protein (211 aa).

Residues 1-20 (MSRVQISTVLAIDTATPAVT) form the signal peptide.

This sequence to M.leprae ML0378.

This is an uncharacterized protein from Mycobacterium tuberculosis (strain CDC 1551 / Oshkosh).